Consider the following 230-residue polypeptide: Phosphatidylserine decarboxylase proenzyme (230 aa).

Residue S186 is the Schiff-base intermediate with substrate; via pyruvic acid of the active site. S186 carries the pyruvic acid (Ser); by autocatalysis modification.

It belongs to the phosphatidylserine decarboxylase family. PSD-A subfamily. In terms of assembly, heterodimer of a large membrane-associated beta subunit and a small pyruvoyl-containing alpha subunit. Pyruvate is required as a cofactor. In terms of processing, is synthesized initially as an inactive proenzyme. Formation of the active enzyme involves a self-maturation process in which the active site pyruvoyl group is generated from an internal serine residue via an autocatalytic post-translational modification. Two non-identical subunits are generated from the proenzyme in this reaction, and the pyruvate is formed at the N-terminus of the alpha chain, which is derived from the carboxyl end of the proenzyme. The post-translation cleavage follows an unusual pathway, termed non-hydrolytic serinolysis, in which the side chain hydroxyl group of the serine supplies its oxygen atom to form the C-terminus of the beta chain, while the remainder of the serine residue undergoes an oxidative deamination to produce ammonia and the pyruvoyl prosthetic group on the alpha chain.

The protein resides in the cell membrane. The catalysed reaction is a 1,2-diacyl-sn-glycero-3-phospho-L-serine + H(+) = a 1,2-diacyl-sn-glycero-3-phosphoethanolamine + CO2. The protein operates within phospholipid metabolism; phosphatidylethanolamine biosynthesis; phosphatidylethanolamine from CDP-diacylglycerol: step 2/2. Catalyzes the formation of phosphatidylethanolamine (PtdEtn) from phosphatidylserine (PtdSer). The protein is Phosphatidylserine decarboxylase proenzyme of Wolbachia pipientis wMel.